Here is a 330-residue protein sequence, read N- to C-terminus: RNA polymerase sigma factor RpoS (330 aa).

The segment at 56–89 (DATQLYLGEIGYSPLLTAEEEVYFARRALRGDVA) is sigma-70 factor domain-1. Residues 94–164 (MIESNLRLVV…ERAIMNQTRT (71 aa)) form a sigma-70 factor domain-2 region. Residues 118 to 121 (DLIE) carry the Interaction with polymerase core subunit RpoC motif. The sigma-70 factor domain-3 stretch occupies residues 174–249 (ELNVYLRTAR…DEKENGPEDT (76 aa)). The tract at residues 262–315 (WLFELNAKQREVLARRFGLLGYEAATLEDVGREIGLTRERVRQIQVEGLRRLRE) is sigma-70 factor domain-4. The H-T-H motif DNA-binding region spans 288 to 307 (LEDVGREIGLTRERVRQIQV).

This sequence belongs to the sigma-70 factor family. RpoS subfamily. As to quaternary structure, interacts with the RNA polymerase core enzyme and RssB.

It localises to the cytoplasm. Functionally, sigma factors are initiation factors that promote the attachment of RNA polymerase to specific initiation sites and are then released. This sigma factor is the master transcriptional regulator of the stationary phase and the general stress response. Controls, positively or negatively, the expression of several hundred genes, which are mainly involved in metabolism, transport, regulation and stress management. Its function is as follows. Protects stationary phase cells from killing induced by endoribonuclease MazF. This chain is RNA polymerase sigma factor RpoS, found in Escherichia coli (strain K12).